The chain runs to 348 residues: Malyl-CoA/beta-methylmalyl-CoA/citramalyl-CoA lyase (348 aa).

Substrate contacts are provided by residues 32-33 (HF), lysine 40, and arginine 92. Glutamate 157 and aspartate 184 together coordinate Mg(2+). Residues 183 to 184 (AD) and leucine 274 each bind substrate.

The protein belongs to the HpcH/HpaI aldolase family. As to quaternary structure, homohexamer. Dimer of trimers. Mg(2+) is required as a cofactor. The cofactor is Mn(2+).

The catalysed reaction is (S)-malyl-CoA = glyoxylate + acetyl-CoA. The enzyme catalyses (2R,3S)-beta-methylmalyl-CoA = propanoyl-CoA + glyoxylate. It carries out the reaction (3S)-citramalyl-CoA = pyruvate + acetyl-CoA. Its activity is regulated as follows. Inhibited by oxalate. Its function is as follows. Involved in the 3-hydroxypropionate cycle used for autotrophic carbon dioxide fixation, and in the glyoxylate assimilation cycle used to regenerate acetyl-CoA and produce pyruvate as universal precursor for biosynthesis. As a part of the 3-hydroxypropionate cycle, it catalyzes the cleavage of (S)-malyl-CoA to yield acetyl-CoA and glyoxylate. As part of the glyoxylate assimilation cycle, it catalyzes the condensation of glyoxylate with propionyl-CoA to yield (2R,3S)-beta-methylmalyl-CoA, and catalyzes the cleavage of (S)-citramalyl-CoA to yield acetyl-CoA and pyruvate. The protein is Malyl-CoA/beta-methylmalyl-CoA/citramalyl-CoA lyase (mcl) of Chloroflexus aurantiacus.